A 345-amino-acid polypeptide reads, in one-letter code: UPF0228 protein MA_2656 (345 aa).

It belongs to the UPF0228 family.

This Methanosarcina acetivorans (strain ATCC 35395 / DSM 2834 / JCM 12185 / C2A) protein is UPF0228 protein MA_2656.